Here is a 241-residue protein sequence, read N- to C-terminus: Ribose-5-phosphate isomerase A (241 aa).

Substrate is bound by residues 28–31 (TGST), 83–86 (DGAD), and 96–99 (KGGG). Glu105 acts as the Proton acceptor in catalysis. Lys123 contacts substrate.

The protein belongs to the ribose 5-phosphate isomerase family. In terms of assembly, homodimer.

It carries out the reaction aldehydo-D-ribose 5-phosphate = D-ribulose 5-phosphate. Its pathway is carbohydrate degradation; pentose phosphate pathway; D-ribose 5-phosphate from D-ribulose 5-phosphate (non-oxidative stage): step 1/1. In terms of biological role, catalyzes the reversible conversion of ribose-5-phosphate to ribulose 5-phosphate. The sequence is that of Ribose-5-phosphate isomerase A from Bradyrhizobium diazoefficiens (strain JCM 10833 / BCRC 13528 / IAM 13628 / NBRC 14792 / USDA 110).